The following is a 459-amino-acid chain: Flavin-containing monooxygenase FMO GS-OX1 (459 aa).

17–22 (GAGAAG) is an FAD binding site. An NADP(+)-binding site is contributed by 211–216 (GNYASG).

It belongs to the FMO family. It depends on FAD as a cofactor. Mainly expressed in leaves. Low levels in flowers and seeds.

It catalyses the reaction a (Z)-omega-(methylsulfanyl)-N-sulfo-alkylhydroximate S-glucoside + NADPH + O2 + H(+) = a (Z)-omega-(methylsulfinyl)-alkyl-glucosinolate + NADP(+) + H2O. Functionally, catalyzes the conversion of methylthioalkyl glucosinolates into methylsulfinylalkyl glucosinolates. Able to S-oxygenate both desulfo- and intact 4-methylthiobutyl glucosinolates, but no activity with methionine, dihomomethionine or 5-methylthiopentaldoxime. This chain is Flavin-containing monooxygenase FMO GS-OX1 (FMOGS-OX1), found in Arabidopsis thaliana (Mouse-ear cress).